The sequence spans 297 residues: HTH-type transcriptional regulator AceR (297 aa).

An HTH lysR-type domain is found at Met-1–Thr-60. The H-T-H motif DNA-binding region spans Phe-20–Ala-39.

The protein belongs to the LysR transcriptional regulatory family. As to quaternary structure, homodimer and homotetramer. Binding of chlorhexidine at the inducer-binding domain causes a quaternary structural change that favors interactions between dimers to form tetramers.

Its subcellular location is the cytoplasm. Functionally, regulates the expression of the AceI transporter. Binds DNA and chlorhexidine. Binds to regulatory sites within the intergenic region between the aceI and aceR genes, and affects the interaction between RNA polymerase (RNAP) and promoter DNA both in the presence and in the absence of chlorhexidine. In the absence of chlorhexidine, prevents transcription of the aceI gene by disrupting interactions between the promoter DNA and RNAP. In the presence of chlorhexidine, activates expression of aceI. When AceR interacts with chlorhexidine, it undergoes a conformational change and the tetrameric form either releases the DNA or shifts the position of the DNA-binding region to allow RNAP to bind onto the promoter DNA to proceed with aceI transcription. The chain is HTH-type transcriptional regulator AceR from Acinetobacter baumannii (strain ATCC 17978 / DSM 105126 / CIP 53.77 / LMG 1025 / NCDC KC755 / 5377).